Reading from the N-terminus, the 273-residue chain is Ribosomal RNA small subunit methyltransferase A (273 aa).

Asparagine 17, leucine 19, glycine 44, glutamate 65, and asparagine 111 together coordinate S-adenosyl-L-methionine.

It belongs to the class I-like SAM-binding methyltransferase superfamily. rRNA adenine N(6)-methyltransferase family. RsmA subfamily.

It is found in the cytoplasm. It catalyses the reaction adenosine(1518)/adenosine(1519) in 16S rRNA + 4 S-adenosyl-L-methionine = N(6)-dimethyladenosine(1518)/N(6)-dimethyladenosine(1519) in 16S rRNA + 4 S-adenosyl-L-homocysteine + 4 H(+). Its function is as follows. Specifically dimethylates two adjacent adenosines (A1518 and A1519) in the loop of a conserved hairpin near the 3'-end of 16S rRNA in the 30S particle. May play a critical role in biogenesis of 30S subunits. The protein is Ribosomal RNA small subunit methyltransferase A of Buchnera aphidicola subsp. Acyrthosiphon pisum (strain APS) (Acyrthosiphon pisum symbiotic bacterium).